Here is a 62-residue protein sequence, read N- to C-terminus: Potassium channel toxin kappa-KTx 3.3 (62 aa).

An N-terminal signal peptide occupies residues 1–26; it reads MKSTLMTASLLILVLLSIVDYASVYA. Positions 27–36 are excised as a propeptide; it reads ELIDSEISME. 2 cysteine pairs are disulfide-bonded: Cys43/Cys61 and Cys47/Cys57.

This sequence belongs to the short scorpion toxin superfamily. Potassium channel inhibitor kappa-KTx family. Kappa-KTx 3 subfamily. As to expression, expressed by the venom gland.

Its subcellular location is the secreted. In terms of biological role, potassium channel inhibitor (Kv). The polypeptide is Potassium channel toxin kappa-KTx 3.3 (Heterometrus petersii (Asian forest scorpion)).